A 79-amino-acid chain; its full sequence is Large ribosomal subunit protein bL31 (79 aa).

It belongs to the bacterial ribosomal protein bL31 family. Type A subfamily. As to quaternary structure, part of the 50S ribosomal subunit.

Functionally, binds the 23S rRNA. This is Large ribosomal subunit protein bL31 from Nostoc sp. (strain PCC 7120 / SAG 25.82 / UTEX 2576).